We begin with the raw amino-acid sequence, 434 residues long: A-adding tRNA nucleotidyltransferase (434 aa).

20–23 is a binding site for ATP; that stretch reads GAVR. Residues aspartate 33 and aspartate 35 each coordinate Mg(2+). Residues 91-92, asparagine 96, 132-141, and arginine 177 each bind ATP; these read RD and DPLRAWRAAR. Residues 227-339 enclose the HD domain; the sequence is VFEHGVEALH…ELLPDLLSLM (113 aa).

This sequence belongs to the tRNA nucleotidyltransferase/poly(A) polymerase family. Requires Mg(2+) as cofactor.

The catalysed reaction is a tRNA with a 3' CC end + ATP = a tRNA with a 3' CCA end + diphosphate. In terms of biological role, tRNA nucleotidyltransferase involved in the synthesis of the tRNA CCA terminus. Adds the terminal adenosine residue to tRNA. The polypeptide is A-adding tRNA nucleotidyltransferase (Deinococcus radiodurans (strain ATCC 13939 / DSM 20539 / JCM 16871 / CCUG 27074 / LMG 4051 / NBRC 15346 / NCIMB 9279 / VKM B-1422 / R1)).